Here is a 547-residue protein sequence, read N- to C-terminus: Isoflavonoid 7-O-beta-apiosyl-glucoside beta-glycosidase (547 aa).

The N-terminal stretch at 1–31 (MHAMTFKAILLLGLLALVSTSASIAFAKEVR) is a signal peptide. Gln-59 provides a ligand contact to a beta-D-glucoside. N-linked (GlcNAc...) asparagine glycosylation is found at Asn-72 and Asn-132. A beta-D-glucoside is bound at residue His-159. A glycan (N-linked (GlcNAc...) asparagine) is linked at Asn-175. An a beta-D-glucoside-binding site is contributed by 204 to 205 (NE). The Proton donor role is filled by Glu-205. A disulfide bond links Cys-224 and Cys-232. N-linked (GlcNAc...) asparagine glycosylation is present at Asn-285. A beta-D-glucoside contacts are provided by residues Tyr-348, Glu-419, Trp-468, 475 to 476 (EW), and Phe-484. Catalysis depends on Glu-419, which acts as the Nucleophile. An N-linked (GlcNAc...) asparagine glycan is attached at Asn-490.

This sequence belongs to the glycosyl hydrolase 1 family. In terms of assembly, homotetramer.

It carries out the reaction 7-[beta-D-apiofuranosyl-(1-&gt;6)-beta-D-glucopyranosyloxy]isoflavonoid + H2O = a 7-hydroxyisoflavonoid + beta-D-apiofuranosyl-(1-&gt;6)-D-glucose.. Its activity is regulated as follows. Not inhibited by iron, calcium, mercury, manganese, zinc or EDTA. Hydrolyzes dalpatein 7-O-beta-D-apiofuranosyl-(1-&gt;6)-beta-D-glucopyranoside and dalnigrein 7-O-beta-D-apiofuranosyl-(1-&gt;6)-beta-D-glucopyranoside. Also has activity towards pNP-beta-D-fucoside and pNP-beta-D-glucoside, but not pNP-beta-cellobioside. The sequence is that of Isoflavonoid 7-O-beta-apiosyl-glucoside beta-glycosidase from Dalbergia nigrescens (Thai blackwood).